The following is a 232-amino-acid chain: Large ribosomal subunit protein uL1 (232 aa).

The protein belongs to the universal ribosomal protein uL1 family. In terms of assembly, part of the 50S ribosomal subunit.

Binds directly to 23S rRNA. The L1 stalk is quite mobile in the ribosome, and is involved in E site tRNA release. Functionally, protein L1 is also a translational repressor protein, it controls the translation of the L11 operon by binding to its mRNA. This is Large ribosomal subunit protein uL1 from Coxiella burnetii (strain RSA 331 / Henzerling II).